Reading from the N-terminus, the 83-residue chain is Cardiotoxin 7a (83 aa).

The N-terminal stretch at 1–21 (MKTLLLTLVVVTIVCLDLGYT) is a signal peptide. Cystine bridges form between C24/C43, C36/C61, C65/C76, and C77/C82.

This sequence belongs to the three-finger toxin family. Short-chain subfamily. Orphan group XV sub-subfamily. Expressed by the venom gland.

Its subcellular location is the secreted. It localises to the target cell membrane. Functionally, has low cytotoxic activity. This chain is Cardiotoxin 7a, found in Naja atra (Chinese cobra).